We begin with the raw amino-acid sequence, 359 residues long: UDP-N-acetylglucosamine--N-acetylmuramyl-(pentapeptide) pyrophosphoryl-undecaprenol N-acetylglucosamine transferase (359 aa).

Residues 13 to 15, Asn125, Arg161, Ser193, Ile241, and Gln285 each bind UDP-N-acetyl-alpha-D-glucosamine; that span reads TAG.

It belongs to the glycosyltransferase 28 family. MurG subfamily.

It is found in the cell membrane. It carries out the reaction di-trans,octa-cis-undecaprenyl diphospho-N-acetyl-alpha-D-muramoyl-L-alanyl-D-glutamyl-meso-2,6-diaminopimeloyl-D-alanyl-D-alanine + UDP-N-acetyl-alpha-D-glucosamine = di-trans,octa-cis-undecaprenyl diphospho-[N-acetyl-alpha-D-glucosaminyl-(1-&gt;4)]-N-acetyl-alpha-D-muramoyl-L-alanyl-D-glutamyl-meso-2,6-diaminopimeloyl-D-alanyl-D-alanine + UDP + H(+). The protein operates within cell wall biogenesis; peptidoglycan biosynthesis. In terms of biological role, cell wall formation. Catalyzes the transfer of a GlcNAc subunit on undecaprenyl-pyrophosphoryl-MurNAc-pentapeptide (lipid intermediate I) to form undecaprenyl-pyrophosphoryl-MurNAc-(pentapeptide)GlcNAc (lipid intermediate II). The polypeptide is UDP-N-acetylglucosamine--N-acetylmuramyl-(pentapeptide) pyrophosphoryl-undecaprenol N-acetylglucosamine transferase (Corynebacterium diphtheriae (strain ATCC 700971 / NCTC 13129 / Biotype gravis)).